A 1203-amino-acid chain; its full sequence is uncharacterized protein (1203 aa).

This is an uncharacterized protein from Magallana gigas (Pacific oyster).